Reading from the N-terminus, the 307-residue chain is 1D-myo-inositol 2-acetamido-2-deoxy-alpha-D-glucopyranoside deacetylase 1 (307 aa).

Residues His21, Asp24, and His157 each coordinate Zn(2+).

Belongs to the MshB deacetylase family. Zn(2+) is required as a cofactor.

The enzyme catalyses 1D-myo-inositol 2-acetamido-2-deoxy-alpha-D-glucopyranoside + H2O = 1D-myo-inositol 2-amino-2-deoxy-alpha-D-glucopyranoside + acetate. Its function is as follows. Catalyzes the deacetylation of 1D-myo-inositol 2-acetamido-2-deoxy-alpha-D-glucopyranoside (GlcNAc-Ins) in the mycothiol biosynthesis pathway. The polypeptide is 1D-myo-inositol 2-acetamido-2-deoxy-alpha-D-glucopyranoside deacetylase 1 (Frankia casuarinae (strain DSM 45818 / CECT 9043 / HFP020203 / CcI3)).